Consider the following 626-residue polypeptide: Miltiradiene synthase KSL1, chloroplastic (626 aa).

The transit peptide at 1–51 (MSLAFNLRVIPFSGHTIQSRRGLFPVHESPMITTKPFAAVKCSLTTSTDLM) directs the protein to the chloroplast. Positions 329, 333, 473, and 481 each coordinate Mg(2+). The DDXXD motif signature appears at 329 to 333 (DDFFD).

This sequence belongs to the terpene synthase family. Mg(2+) is required as a cofactor. Highly expressed in roots, and, at low levels, in stems and leaves.

The protein resides in the plastid. Its subcellular location is the chloroplast. It carries out the reaction (+)-copalyl diphosphate = miltiradiene + diphosphate. The protein operates within secondary metabolite biosynthesis; terpenoid biosynthesis. Its function is as follows. Involved in the biosynthesis of ent-kaurene diterpenoids natural products such as oridonin, miltiradiene, eriocalyxin B and nezukol, known to exhibit antitumor, anti-inflammatory and antibacterial activities. Catalyzes the conversion of (+)-copalyl diphosphate ((+)-CPP) to miltiradiene. The chain is Miltiradiene synthase KSL1, chloroplastic from Isodon rubescens (Rabdosia rubescens).